A 682-amino-acid polypeptide reads, in one-letter code: Acetyl-coenzyme A synthetase 2-like, mitochondrial (682 aa).

Residues 1 to 38 constitute a mitochondrion transit peptide; it reads MAARSLGSGVGRLLRGLQGRSGQSGWSLSVSRSTATRL. CoA is bound by residues 217–220 and threonine 334; that span reads RGGR. Lysine 389 carries the post-translational modification N6-acetyllysine. Residues 410–412, 434–439, aspartate 526, and arginine 541 each bind ATP; these read GEP and DTWWQT. Serine 549 is a CoA binding site. Arginine 552 provides a ligand contact to ATP. Lysine 635 carries the N6-acetyllysine modification.

The protein belongs to the ATP-dependent AMP-binding enzyme family. Interacts with SIRT3. Reversibly acetylated at Lys-635. The acetyl-CoA synthase activity is inhibited by acetylation and activated by deacetylation mediated by the deacetylase SIRT3. In terms of tissue distribution, highly expressed in heart, testis, kidney, skeletal muscle, lung and spleen. Detected at low levels in brain.

It is found in the mitochondrion matrix. The enzyme catalyses acetate + ATP + CoA = acetyl-CoA + AMP + diphosphate. The catalysed reaction is propanoate + ATP + CoA = propanoyl-CoA + AMP + diphosphate. Its activity is regulated as follows. Inhibited by acetylation at Lys-635 and activated by deacetylation mediated by the deacetylase SIRT3. Catalyzes the synthesis of acetyl-CoA from short-chain fatty acids. Acetate is the preferred substrate. Can also utilize propionate with a much lower affinity. Provides acetyl-CoA that is utilized mainly for oxidation under ketogenic conditions. Involved in thermogenesis under ketogenic conditions, using acetate as a vital fuel when carbohydrate availability is insufficient. This Mus musculus (Mouse) protein is Acetyl-coenzyme A synthetase 2-like, mitochondrial (Acss1).